Consider the following 398-residue polypeptide: uncharacterized protein (398 aa).

This is an uncharacterized protein from Buchnera aphidicola subsp. Baizongia pistaciae (strain Bp).